Consider the following 216-residue polypeptide: Ribosomal RNA small subunit methyltransferase G (216 aa).

Residues glycine 73, leucine 78, 124–125, and arginine 139 contribute to the S-adenosyl-L-methionine site; that span reads AE.

Belongs to the methyltransferase superfamily. RNA methyltransferase RsmG family.

It is found in the cytoplasm. Functionally, specifically methylates the N7 position of guanine in position 518 of 16S rRNA. The sequence is that of Ribosomal RNA small subunit methyltransferase G from Paenarthrobacter aurescens (strain TC1).